The following is a 193-amino-acid chain: Holliday junction branch migration complex subunit RuvA (193 aa).

The segment at 1-64 (MIGRIAGILL…EDANLLYGFL (64 aa)) is domain I. Positions 65 to 139 (TPQERTTFRE…GKLGADLGEL (75 aa)) are domain II. The flexible linker stretch occupies residues 139–143 (LAGAA). A domain III region spans residues 144–193 (SPSDHATDILNALLALGYSEKEGLAAIKNVPAGTGVSEGIKLALKALSKV).

This sequence belongs to the RuvA family. In terms of assembly, homotetramer. Forms an RuvA(8)-RuvB(12)-Holliday junction (HJ) complex. HJ DNA is sandwiched between 2 RuvA tetramers; dsDNA enters through RuvA and exits via RuvB. An RuvB hexamer assembles on each DNA strand where it exits the tetramer. Each RuvB hexamer is contacted by two RuvA subunits (via domain III) on 2 adjacent RuvB subunits; this complex drives branch migration. In the full resolvosome a probable DNA-RuvA(4)-RuvB(12)-RuvC(2) complex forms which resolves the HJ.

Its subcellular location is the cytoplasm. Functionally, the RuvA-RuvB-RuvC complex processes Holliday junction (HJ) DNA during genetic recombination and DNA repair, while the RuvA-RuvB complex plays an important role in the rescue of blocked DNA replication forks via replication fork reversal (RFR). RuvA specifically binds to HJ cruciform DNA, conferring on it an open structure. The RuvB hexamer acts as an ATP-dependent pump, pulling dsDNA into and through the RuvAB complex. HJ branch migration allows RuvC to scan DNA until it finds its consensus sequence, where it cleaves and resolves the cruciform DNA. The polypeptide is Holliday junction branch migration complex subunit RuvA (Burkholderia lata (strain ATCC 17760 / DSM 23089 / LMG 22485 / NCIMB 9086 / R18194 / 383)).